Consider the following 239-residue polypeptide: Prolyl hydroxylase EGLN3 (239 aa).

Positions 62–73 (AGPRAGVSKRHL) are beta(2)beta(3) 'finger-like' loop. The required for interaction with ADRB2 stretch occupies residues 88–104 (CEAINFLLSLIDRLVLY). Positions 116–214 (ERSKAMVACY…RYAMTVWYFD (99 aa)) constitute a Fe2OG dioxygenase domain. Residues His135, Asp137, and His196 each contribute to the Fe cation site. Arg205 is a binding site for 2-oxoglutarate.

Interacts with ADRB2; the interaction hydroxylates ADRB2 facilitating its ubiquitination by the VHL-E3 ligase complex. Interacts with PKM; the interaction hydroxylates PKM in hypoxia. Interacts with WDR83; the interaction leads to almost complete elimination of HIF-mediated reporter activity. Interacts with BCL2 (via its BH4 domain); the interaction disrupts the BAX-BCL4 complex inhibiting the anti-apoptotic activity of BCL2. Interacts with LIMD1, WTIP and AJUBA. It depends on Fe(2+) as a cofactor. Requires L-ascorbate as cofactor. Ubiquitinated by SIAH1 and/or SIAH2 in response to the unfolded protein response (UPR), leading to its degradation. In terms of tissue distribution, highly expressed in cardiac and smooth muscle. Also high expression in brain, skeletal muscle and kidney. Low levels in lung.

The protein resides in the nucleus. The protein localises to the cytoplasm. The catalysed reaction is L-prolyl-[protein] + 2-oxoglutarate + O2 = trans-4-hydroxy-L-prolyl-[protein] + succinate + CO2. It catalyses the reaction L-prolyl-[hypoxia-inducible factor alpha subunit] + 2-oxoglutarate + O2 = trans-4-hydroxy-L-prolyl-[hypoxia-inducible factor alpha subunit] + succinate + CO2. Prolyl hydroxylase that mediates hydroxylation of proline residues in target proteins, such as PKM, TELO2, ATF4 and HIF1A. Target proteins are preferentially recognized via a LXXLAP motif. Cellular oxygen sensor that catalyzes, under normoxic conditions, the post-translational formation of 4-hydroxyproline in hypoxia-inducible factor (HIF) alpha proteins. Hydroxylates a specific proline found in each of the oxygen-dependent degradation (ODD) domains (N-terminal, NODD, and C-terminal, CODD) of HIF1A. Also hydroxylates HIF2A. Has a preference for the CODD site for both HIF1A and HIF2A. Hydroxylation on the NODD site by EGLN3 appears to require prior hydroxylation on the CODD site. Hydroxylated HIFs are then targeted for proteasomal degradation via the von Hippel-Lindau ubiquitination complex. Under hypoxic conditions, the hydroxylation reaction is attenuated allowing HIFs to escape degradation resulting in their translocation to the nucleus, heterodimerization with HIF1B, and increased expression of hypoxy-inducible genes. ELGN3 is the most important isozyme in limiting physiological activation of HIFs (particularly HIF2A) in hypoxia. Also hydroxylates PKM in hypoxia, limiting glycolysis. Under normoxia, hydroxylates and regulates the stability of ADRB2. Regulator of cardiomyocyte and neuronal apoptosis. In cardiomyocytes, inhibits the anti-apoptotic effect of BCL2 by disrupting the BAX-BCL2 complex. In neurons, has a NGF-induced proapoptotic effect, probably through regulating CASP3 activity. Also essential for hypoxic regulation of neutrophilic inflammation. Plays a crucial role in DNA damage response (DDR) by hydroxylating TELO2, promoting its interaction with ATR which is required for activation of the ATR/CHK1/p53 pathway. Also mediates hydroxylation of ATF4, leading to decreased protein stability of ATF4. This chain is Prolyl hydroxylase EGLN3, found in Mus musculus (Mouse).